We begin with the raw amino-acid sequence, 763 residues long: Amine oxidase [copper-containing] 3 (763 aa).

The Cytoplasmic portion of the chain corresponds to 2–6 (TQKTT). A helical; Signal-anchor for type II membrane protein membrane pass occupies residues 7-27 (LVLLALAVITIFALVCVLLAG). Residues 28-763 (RSGDGGRLSQ…AFSHGGFTYK (736 aa)) lie on the Extracellular side of the membrane. A glycan (N-linked (GlcNAc...) asparagine) is linked at N137. A disulfide bond links C198 and C199. N-linked (GlcNAc...) asparagine glycosylation is found at N232 and N294. D386 serves as the catalytic Proton acceptor. C404 and C430 are joined by a disulfide. Y471 serves as the catalytic Schiff-base intermediate with substrate; via topaquinone. Y471 is modified (2',4',5'-topaquinone). Positions 520 and 522 each coordinate Cu(2+). Residues D529, L530, D531, and E572 each contribute to the Ca(2+) site. Residues N581 and N592 are each glycosylated (N-linked (GlcNAc...) asparagine). Ca(2+) is bound by residues E641 and F663. Residue N666 is glycosylated (N-linked (GlcNAc...) asparagine). Positions 667, 673, and 674 each coordinate Ca(2+). A Cu(2+)-binding site is contributed by H684. An intrachain disulfide couples C734 to C741.

It belongs to the copper/topaquinone oxidase family. In terms of assembly, homodimer; disulfide-linked. Probably forms heterodimers with AOC2. It depends on Cu(2+) as a cofactor. Requires Ca(2+) as cofactor. L-topaquinone is required as a cofactor. Topaquinone (TPQ) is generated by copper-dependent autoxidation of a specific tyrosyl residue. In terms of processing, N- and O-glycosylated. Highly expressed in adipocytes, aorta and lung. Expressed at lower levels in heart, kidney, large intestine, liver, small intestine and stomach.

Its subcellular location is the cell membrane. The enzyme catalyses methylamine + O2 + H2O = formaldehyde + H2O2 + NH4(+). It carries out the reaction benzylamine + O2 + H2O = benzaldehyde + H2O2 + NH4(+). The catalysed reaction is 2-phenylethylamine + O2 + H2O = 2-phenylacetaldehyde + H2O2 + NH4(+). In terms of biological role, catalyzes the oxidative deamination of primary amines to the corresponding aldehydes with the concomitant production of hydrogen peroxide and ammonia. Has a preference for the primary monoamines methylamine and benzylamine. Could also act on 2-phenylethylamine but much less efficiently. At endothelial cells surface can also function as a cell adhesion protein that participates in lymphocyte extravasation and recirculation by mediating the binding of lymphocytes to peripheral lymph node vascular endothelial cells in an L-selectin-independent fashion. This is Amine oxidase [copper-containing] 3 from Rattus norvegicus (Rat).